The chain runs to 343 residues: DNA-directed RNA polymerase subunit alpha (343 aa).

Positions 1–243 (MTQEIDEKIP…EQLDIFINFD (243 aa)) are alpha N-terminal domain (alpha-NTD). Residues 261–343 (ENPYLDKPVE…NAPSDAETEE (83 aa)) form an alpha C-terminal domain (alpha-CTD) region.

This sequence belongs to the RNA polymerase alpha chain family. In terms of assembly, homodimer. The RNAP catalytic core consists of 2 alpha, 1 beta, 1 beta' and 1 omega subunit. When a sigma factor is associated with the core the holoenzyme is formed, which can initiate transcription.

The enzyme catalyses RNA(n) + a ribonucleoside 5'-triphosphate = RNA(n+1) + diphosphate. DNA-dependent RNA polymerase catalyzes the transcription of DNA into RNA using the four ribonucleoside triphosphates as substrates. This chain is DNA-directed RNA polymerase subunit alpha, found in Desulfotalea psychrophila (strain LSv54 / DSM 12343).